A 53-amino-acid chain; its full sequence is Rubredoxin (53 aa).

The 53-residue stretch at 1–53 folds into the Rubredoxin-like domain; sequence MQKFECTLCGYIYDPALVGPDTPDQDGAFEDVSENWVCPLCGAGKEDFEVYED. Fe cation-binding residues include cysteine 6, cysteine 9, cysteine 38, and cysteine 41.

Belongs to the rubredoxin family. The cofactor is Fe(3+).

In terms of biological role, rubredoxin is a small nonheme, iron protein lacking acid-labile sulfide. Its single Fe, chelated to 4 Cys, functions as an electron acceptor and may also stabilize the conformation of the molecule. This chain is Rubredoxin, found in Peptoniphilus asaccharolyticus (Peptostreptococcus asaccharolyticus).